The following is a 287-amino-acid chain: Pyridoxal 5'-phosphate synthase subunit PdxS (287 aa).

D21 provides a ligand contact to D-ribose 5-phosphate. The active-site Schiff-base intermediate with D-ribose 5-phosphate is K78. G150 contacts D-ribose 5-phosphate. R162 is a binding site for D-glyceraldehyde 3-phosphate. D-ribose 5-phosphate-binding positions include G211 and 232–233; that span reads GS.

It belongs to the PdxS/SNZ family. As to quaternary structure, in the presence of PdxT, forms a dodecamer of heterodimers.

It catalyses the reaction aldehydo-D-ribose 5-phosphate + D-glyceraldehyde 3-phosphate + L-glutamine = pyridoxal 5'-phosphate + L-glutamate + phosphate + 3 H2O + H(+). It participates in cofactor biosynthesis; pyridoxal 5'-phosphate biosynthesis. Functionally, catalyzes the formation of pyridoxal 5'-phosphate from ribose 5-phosphate (RBP), glyceraldehyde 3-phosphate (G3P) and ammonia. The ammonia is provided by the PdxT subunit. Can also use ribulose 5-phosphate and dihydroxyacetone phosphate as substrates, resulting from enzyme-catalyzed isomerization of RBP and G3P, respectively. This chain is Pyridoxal 5'-phosphate synthase subunit PdxS, found in Francisella tularensis subsp. tularensis (strain FSC 198).